Here is a 224-residue protein sequence, read N- to C-terminus: Pyridoxine/pyridoxamine 5'-phosphate oxidase (224 aa).

Residues 69 to 74, 83 to 84, Arg-89, Lys-90, and Gln-112 each bind FMN; these read RHVLLK and FT. Residue Lys-74 coordinates substrate. Substrate is bound by residues Tyr-130, Arg-134, and Ser-138. Residues 148–149 and Trp-194 contribute to the FMN site; that span reads QS. 200 to 202 contacts substrate; it reads RMH. Arg-204 contributes to the FMN binding site.

It belongs to the pyridoxamine 5'-phosphate oxidase family. In terms of assembly, homodimer. FMN serves as cofactor.

It catalyses the reaction pyridoxamine 5'-phosphate + O2 + H2O = pyridoxal 5'-phosphate + H2O2 + NH4(+). The enzyme catalyses pyridoxine 5'-phosphate + O2 = pyridoxal 5'-phosphate + H2O2. The protein operates within cofactor metabolism; pyridoxal 5'-phosphate salvage; pyridoxal 5'-phosphate from pyridoxamine 5'-phosphate: step 1/1. It functions in the pathway cofactor metabolism; pyridoxal 5'-phosphate salvage; pyridoxal 5'-phosphate from pyridoxine 5'-phosphate: step 1/1. Catalyzes the oxidation of either pyridoxine 5'-phosphate (PNP) or pyridoxamine 5'-phosphate (PMP) into pyridoxal 5'-phosphate (PLP). The chain is Pyridoxine/pyridoxamine 5'-phosphate oxidase from Acidothermus cellulolyticus (strain ATCC 43068 / DSM 8971 / 11B).